The following is a 368-amino-acid chain: Quinolinate synthase (368 aa).

2 residues coordinate iminosuccinate: His-46 and Ser-63. A [4Fe-4S] cluster-binding site is contributed by Cys-110. Iminosuccinate-binding positions include Tyr-141–Asn-143 and Ser-162. A [4Fe-4S] cluster-binding site is contributed by Cys-230. Residues His-256–Glu-258 and Thr-273 each bind iminosuccinate. Cys-320 is a [4Fe-4S] cluster binding site.

Belongs to the quinolinate synthase family. Type 3 subfamily. [4Fe-4S] cluster serves as cofactor.

It is found in the cytoplasm. The catalysed reaction is iminosuccinate + dihydroxyacetone phosphate = quinolinate + phosphate + 2 H2O + H(+). Its pathway is cofactor biosynthesis; NAD(+) biosynthesis; quinolinate from iminoaspartate: step 1/1. In terms of biological role, catalyzes the condensation of iminoaspartate with dihydroxyacetone phosphate to form quinolinate. The protein is Quinolinate synthase of Bacillus thuringiensis subsp. konkukian (strain 97-27).